Here is a 135-residue protein sequence, read N- to C-terminus: MDSEESRCFSGYDGNRFKLVILASQRAHELSSGAATLVDRQGDKNTVVALREIASNQLDLSTVFGLAVQRCRKYLEEFAGSRGIAGHSSHVSPSRSSRHTGLGKSFVDNKSTYSASFLDQDKFLSGGKDDGIEGF.

The tract at residues isoleucine 84–phenylalanine 106 is disordered.

Belongs to the RNA polymerase subunit omega family. In terms of assembly, the RNAP catalytic core consists of 2 alpha, 1 beta, 1 beta' and 1 omega subunit. When a sigma factor is associated with the core the holoenzyme is formed, which can initiate transcription.

It carries out the reaction RNA(n) + a ribonucleoside 5'-triphosphate = RNA(n+1) + diphosphate. Promotes RNA polymerase assembly. Latches the N- and C-terminal regions of the beta' subunit thereby facilitating its interaction with the beta and alpha subunits. The protein is DNA-directed RNA polymerase subunit omega of Anaplasma phagocytophilum (strain HZ).